A 66-amino-acid polypeptide reads, in one-letter code: GRDGYVVKNGTNCKYSCEIGSEYEYCGPLCKRKNAKTGYCYAFACWCIDVPDDVKLYGDDGTYCSS.

The LCN-type CS-alpha/beta domain maps to 2–65 (RDGYVVKNGT…LYGDDGTYCS (64 aa)). N-linked (GlcNAc...) asparagine glycosylation is present at N9. Disulfide bonds link C13–C64, C17–C40, C26–C45, and C30–C47.

The protein belongs to the long (4 C-C) scorpion toxin superfamily. Sodium channel inhibitor family. Beta subfamily. In terms of processing, N-glycans are core-fucosylated, heterogeneous and short which could be the result of extensive trimming. Expressed by the venom gland.

Its subcellular location is the secreted. Functionally, beta toxins bind voltage-independently at site-4 of sodium channels and shift the voltage of activation toward more negative potentials thereby affecting sodium channel activation and promoting spontaneous and repetitive firing. This toxin is active only on insects. This toxin has very low anti-insect activity. The chain is Toxin Aah6 from Androctonus australis (Sahara scorpion).